The primary structure comprises 56 residues: Small ribosomal subunit protein bS21 (56 aa).

The protein belongs to the bacterial ribosomal protein bS21 family.

The chain is Small ribosomal subunit protein bS21 (rpsU) from Geobacillus stearothermophilus (Bacillus stearothermophilus).